A 399-amino-acid chain; its full sequence is PCI domain-containing protein 2 (399 aa).

The region spanning 210 to 391 (VTFKYYVGRK…QKLVVSKQNP (182 aa)) is the PCI domain.

This sequence belongs to the CSN12 family.

This Xenopus laevis (African clawed frog) protein is PCI domain-containing protein 2 (pcid2).